A 382-amino-acid polypeptide reads, in one-letter code: GDP-mannose 4,6 dehydratase 2 (382 aa).

NADP(+) is bound by residues 40-45 (GITGQD), 97-98 (DM), 119-123 (LAAQS), and Y134. T166 is a catalytic residue. Active-site nucleophile residues include E168 and Y190. 3 residues coordinate NADP(+): K194, H220, and R225.

Belongs to the NAD(P)-dependent epimerase/dehydratase family. GDP-mannose 4,6-dehydratase subfamily. The cofactor is NADP(+).

It carries out the reaction GDP-alpha-D-mannose = GDP-4-dehydro-alpha-D-rhamnose + H2O. Its pathway is nucleotide-sugar biosynthesis; GDP-L-fucose biosynthesis via de novo pathway; GDP-L-fucose from GDP-alpha-D-mannose: step 1/2. Functionally, catalyzes the conversion of GDP-D-mannose to GDP-4-dehydro-6-deoxy-D-mannose. The sequence is that of GDP-mannose 4,6 dehydratase 2 (gmd-2) from Caenorhabditis elegans.